Here is a 189-residue protein sequence, read N- to C-terminus: UPF0301 protein CTA_0231 (189 aa).

Belongs to the UPF0301 (AlgH) family.

This is UPF0301 protein CTA_0231 from Chlamydia trachomatis serovar A (strain ATCC VR-571B / DSM 19440 / HAR-13).